The primary structure comprises 270 residues: Very long chain fatty acid elongase 3 (270 aa).

An N-linked (GlcNAc...) asparagine glycan is attached at Asn6. 2 consecutive transmembrane segments (helical) span residues 29-49 (FFEE…VLIA) and 63-83 (LQGP…LGAV). Asn110 is a glycosylation site (N-linked (GlcNAc...) asparagine). The next 5 membrane-spanning stretches (helical) occupy residues 115–135 (FWSW…AFII), 140–160 (PLIF…SFGY), 164–184 (VPAG…MYTY), 198–218 (LPML…IVSI), and 235–255 (HLFW…HFFC). Positions 266-270 (KTKSQ) match the Di-lysine motif motif.

It belongs to the ELO family. ELOVL3 subfamily. Interacts with TECR. N-Glycosylated. As to expression, testis.

It is found in the endoplasmic reticulum membrane. It catalyses the reaction a very-long-chain acyl-CoA + malonyl-CoA + H(+) = a very-long-chain 3-oxoacyl-CoA + CO2 + CoA. It carries out the reaction eicosanoyl-CoA + malonyl-CoA + H(+) = 3-oxodocosanoyl-CoA + CO2 + CoA. The enzyme catalyses hexadecanoyl-CoA + malonyl-CoA + H(+) = 3-oxooctadecanoyl-CoA + CO2 + CoA. The catalysed reaction is octadecanoyl-CoA + malonyl-CoA + H(+) = 3-oxoeicosanoyl-CoA + CO2 + CoA. It catalyses the reaction (9Z)-octadecenoyl-CoA + malonyl-CoA + H(+) = 3-oxo-(11Z)-eicosenoyl-CoA + CO2 + CoA. It carries out the reaction (9Z,12Z)-octadecadienoyl-CoA + malonyl-CoA + H(+) = (11Z,14Z)-3-oxoicosa-11,14-dienoyl-CoA + CO2 + CoA. The enzyme catalyses (9Z,12Z,15Z)-octadecatrienoyl-CoA + malonyl-CoA + H(+) = (11Z,14Z,17Z)-3-oxoeicosatrienoyl-CoA + CO2 + CoA. The catalysed reaction is docosanoyl-CoA + malonyl-CoA + H(+) = 3-oxotetracosanoyl-CoA + CO2 + CoA. It catalyses the reaction tetradecanoyl-CoA + malonyl-CoA + H(+) = 3-oxohexadecanoyl-CoA + CO2 + CoA. It participates in lipid metabolism; polyunsaturated fatty acid biosynthesis. Functionally, catalyzes the first and rate-limiting reaction of the four reactions that constitute the long-chain fatty acids elongation cycle. This endoplasmic reticulum-bound enzymatic process allows the addition of 2 carbons to the chain of long- and very long-chain fatty acids (VLCFAs) per cycle. Condensing enzyme that exhibits activity toward saturated and unsaturated acyl-CoA substrates with higher activity toward C18 acyl-CoAs, especially C18:0 acyl-CoAs. May participate in the production of saturated and monounsaturated VLCFAs of different chain lengths that are involved in multiple biological processes as precursors of membrane lipids and lipid mediators. The chain is Very long chain fatty acid elongase 3 from Homo sapiens (Human).